The sequence spans 194 residues: UPF0301 protein BT_0659 (194 aa).

The protein belongs to the UPF0301 (AlgH) family.

In Bartonella tribocorum (strain CIP 105476 / IBS 506), this protein is UPF0301 protein BT_0659.